The sequence spans 341 residues: Protein P3 (341 aa).

The segment at 46–175 is disordered; sequence RARQAANPVS…QTKNAPDANE (130 aa). Basic residues predominate over residues 97 to 116; it reads KSKRAVRREKRRTAAKKATN. Positions 142–152 are enriched in low complexity; sequence SYLSSLLSSPS.

The protein belongs to the nepovirus protein P3 family.

The protein is Protein P3 of Vitis rupestris (Grape).